The sequence spans 242 residues: Small ribosomal subunit protein uS2 (242 aa).

It belongs to the universal ribosomal protein uS2 family.

The chain is Small ribosomal subunit protein uS2 from Colwellia psychrerythraea (strain 34H / ATCC BAA-681) (Vibrio psychroerythus).